The chain runs to 68 residues: Sec-independent protein translocase protein TatA (68 aa).

The chain crosses the membrane as a helical span at residues 1–21; sequence MGSFSIWHWLIVLAVVLLLFG. The interval 48-68 is disordered; the sequence is AAAADKSIDGKTVDHKSDEVR. The segment covering 53–68 has biased composition (basic and acidic residues); the sequence is KSIDGKTVDHKSDEVR.

Belongs to the TatA/E family. The Tat system comprises two distinct complexes: a TatABC complex, containing multiple copies of TatA, TatB and TatC subunits, and a separate TatA complex, containing only TatA subunits. Substrates initially bind to the TatABC complex, which probably triggers association of the separate TatA complex to form the active translocon.

The protein localises to the cell inner membrane. In terms of biological role, part of the twin-arginine translocation (Tat) system that transports large folded proteins containing a characteristic twin-arginine motif in their signal peptide across membranes. TatA could form the protein-conducting channel of the Tat system. The protein is Sec-independent protein translocase protein TatA of Sinorhizobium medicae (strain WSM419) (Ensifer medicae).